The sequence spans 487 residues: Sodium-coupled neutral amino acid symporter 1 (487 aa).

Topologically, residues 1–74 (MMHFKSGLEL…EYIPGTTSLG (74 aa)) are cytoplasmic. Ser6 is modified (phosphoserine). Thr11 bears the Phosphothreonine mark. A phosphoserine mark is found at Ser25, Ser28, Ser49, and Ser52. Thr54 is subject to Phosphothreonine. Ser56 is modified (phosphoserine). Residues 75-97 (MSVFNLSNAIMGSGILGLAFALA) traverse the membrane as a helical segment. Topologically, residues 98-112 (NTGILLFLVLLTSVT) are extracellular. A helical membrane pass occupies residues 113 to 133 (LLSIYSINLLLICSKETGCMV). Residues 134-147 (YEKLGEQVFGTTGK) are Cytoplasmic-facing. The helical transmembrane segment at 148–168 (FVIFGATSLQNTGAMLSYLFI) threads the bilayer. At 169–188 (VKNELPSAIKFLMGKEETFS) the chain is on the extracellular side. A helical transmembrane segment spans residues 189-211 (AWYVDGRVLVVIVTFGIILPLCL). At 212 to 216 (LKNLG) the chain is on the cytoplasmic side. The helical transmembrane segment at 217–237 (YLGYTSGFSLSCMVFFLIVVI) threads the bilayer. Residues 238-275 (YKKFQIPCIVPELNSTISANSTNADTCTPKYVTFNSKT) are Extracellular-facing. Cys245 and Cys264 are joined by a disulfide. 2 N-linked (GlcNAc...) asparagine glycosylation sites follow: Asn251 and Asn257. Residues 276–296 (VYALPTIAFAFVCHPSVLPIY) traverse the membrane as a helical segment. The Cytoplasmic segment spans residues 297–312 (SELKDRSQKKMQMVSN). The helical transmembrane segment at 313–333 (ISFFAMFVMYFLTAIFGYLTF) threads the bilayer. Residues 334 to 350 (YDNVQSDLLHKYQSKDD) lie on the Extracellular side of the membrane. The helical transmembrane segment at 351–371 (ILILTVRLAVIVAVILTVPVL) threads the bilayer. Residues 372–393 (FFTVRSSLFELAKKTKFNLCRH) are Cytoplasmic-facing. Residues 394–414 (TVVTCILLVVINLLVIFIPSM) traverse the membrane as a helical segment. Residues 415 to 416 (KD) lie on the Extracellular side of the membrane. Residues 417 to 437 (IFGVVGVTSANMLIFILPSSL) traverse the membrane as a helical segment. At 438–452 (YLKITDQDGDKGTQR) the chain is on the cytoplasmic side. Residues 453-473 (IWAALFLGLGVLFSLVSIPLV) form a helical membrane-spanning segment. Topologically, residues 474 to 487 (IYDWACSSSSDEGH) are extracellular.

The protein belongs to the amino acid/polyamine transporter 2 family. N-glycosylation plays an important role in the L-glutamine transport. In terms of tissue distribution, expressed in the cerebral cortex by pyramidal and GABAergic neurons, astrocytes and other non-neuronal cells (at protein level). Expressed in placenta, heart, lung, skeletal muscle, spleen, stomach and testis. Highly expressed in cytotrophoblast cells from term placenta.

It is found in the cell membrane. The catalysed reaction is L-glutamine(in) + Na(+)(in) = L-glutamine(out) + Na(+)(out). The enzyme catalyses L-alanine(in) + Na(+)(in) = L-alanine(out) + Na(+)(out). It carries out the reaction L-asparagine(in) + Na(+)(in) = L-asparagine(out) + Na(+)(out). It catalyses the reaction L-histidine(in) + Na(+)(in) = L-histidine(out) + Na(+)(out). The catalysed reaction is L-serine(in) + Na(+)(in) = L-serine(out) + Na(+)(out). The enzyme catalyses L-cysteine(in) + Na(+)(in) = L-cysteine(out) + Na(+)(out). It carries out the reaction L-methionine(in) + Na(+)(in) = L-methionine(out) + Na(+)(out). It catalyses the reaction glycine(in) + Na(+)(in) = glycine(out) + Na(+)(out). The catalysed reaction is L-threonine(in) + Na(+)(in) = L-threonine(out) + Na(+)(out). The enzyme catalyses L-proline(in) + Na(+)(in) = L-proline(out) + Na(+)(out). Its activity is regulated as follows. Inhibited by alpha-(methylamino)isobutyric acid (MeAIB). Inhibited by lithium, potassium, choline ions, N-methylglucamine. The pH dependence has an allosteric effect on the transport. In terms of biological role, symporter that cotransports short-chain neutral amino acids and sodium ions from the extraccellular to the intracellular side of the cell membrane. The transport is elctrogenic, pH dependent and driven by the Na(+) electrochemical gradient. Participates in the astroglia-derived glutamine transport into GABAergic interneurons for neurotransmitter GABA de novo synthesis. May also contributes to amino acid transport in placental trophoblasts. Also regulates synaptic plasticity. This chain is Sodium-coupled neutral amino acid symporter 1 (SLC38A1), found in Homo sapiens (Human).